The sequence spans 675 residues: Putative L-type lectin-domain containing receptor kinase I.11 (675 aa).

The first 22 residues, 1–22 (MASERLHLILLVFFNHLTFLLS), serve as a signal peptide directing secretion. The Extracellular segment spans residues 23-292 (QQEEAGFIYN…PKAKQEQTSP (270 aa)). The tract at residues 27–263 (AGFIYNGFGQ…YQYILGWSFS (237 aa)) is legume-lectin like. Asn-60, Asn-129, Asn-186, Asn-209, and Asn-230 each carry an N-linked (GlcNAc...) asparagine glycan. A helical membrane pass occupies residues 293–313 (LLIVLLMLLVLIMLAVLGGIY). The Cytoplasmic segment spans residues 314–675 (LYRRKKYAEV…THTITYGDGR (362 aa)). Positions 348–620 (FDKDGRLGKG…QVIQYINQNL (273 aa)) constitute a Protein kinase domain. ATP contacts are provided by residues 354 to 362 (LGKGGFGEV) and Lys-376. Asp-472 (proton acceptor) is an active-site residue.

It in the C-terminal section; belongs to the protein kinase superfamily. Ser/Thr protein kinase family. This sequence in the N-terminal section; belongs to the leguminous lectin family.

It localises to the cell membrane. The catalysed reaction is L-seryl-[protein] + ATP = O-phospho-L-seryl-[protein] + ADP + H(+). It carries out the reaction L-threonyl-[protein] + ATP = O-phospho-L-threonyl-[protein] + ADP + H(+). The protein is Putative L-type lectin-domain containing receptor kinase I.11 (LECRK111) of Arabidopsis thaliana (Mouse-ear cress).